Consider the following 362-residue polypeptide: Probable S-adenosylmethionine-dependent methyltransferase At5g37990 (362 aa).

Tyrosine 19, cysteine 66, asparagine 71, aspartate 107, serine 136, and phenylalanine 137 together coordinate S-adenosyl-L-homocysteine. Mg(2+)-binding residues include asparagine 175, glutamate 261, and phenylalanine 263.

Belongs to the methyltransferase superfamily. Type-7 methyltransferase family. In terms of assembly, homodimer. Requires Mg(2+) as cofactor.

In Arabidopsis thaliana (Mouse-ear cress), this protein is Probable S-adenosylmethionine-dependent methyltransferase At5g37990.